A 258-amino-acid chain; its full sequence is NAD-capped RNA hydrolase NudC (258 aa).

Residue Arg69 participates in substrate binding. 2 residues coordinate Zn(2+): Cys98 and Cys101. Glu111 serves as a coordination point for substrate. Positions 116 and 119 each coordinate Zn(2+). Substrate is bound at residue Tyr124. The 124-residue stretch at 125-248 (PQIAPCIIVA…TVARRLIEDT (124 aa)) folds into the Nudix hydrolase domain. Positions 158, 174, and 178 each coordinate a divalent metal cation. A Nudix box motif is present at residues 159–180 (GFVEVGETLEQTVAREVMEESG). Substrate is bound at residue 192-199 (QPWPFPMS). Glu219 provides a ligand contact to a divalent metal cation. Ala241 serves as a coordination point for substrate.

The protein belongs to the Nudix hydrolase family. NudC subfamily. As to quaternary structure, homodimer. The cofactor is Mg(2+). It depends on Mn(2+) as a cofactor. Requires Zn(2+) as cofactor.

The catalysed reaction is a 5'-end NAD(+)-phospho-ribonucleoside in mRNA + H2O = a 5'-end phospho-adenosine-phospho-ribonucleoside in mRNA + beta-nicotinamide D-ribonucleotide + 2 H(+). The enzyme catalyses NAD(+) + H2O = beta-nicotinamide D-ribonucleotide + AMP + 2 H(+). It catalyses the reaction NADH + H2O = reduced beta-nicotinamide D-ribonucleotide + AMP + 2 H(+). Functionally, mRNA decapping enzyme that specifically removes the nicotinamide adenine dinucleotide (NAD) cap from a subset of mRNAs by hydrolyzing the diphosphate linkage to produce nicotinamide mononucleotide (NMN) and 5' monophosphate mRNA. The NAD-cap is present at the 5'-end of some mRNAs and stabilizes RNA against 5'-processing. Has preference for mRNAs with a 5'-end purine. Catalyzes the hydrolysis of a broad range of dinucleotide pyrophosphates. This is NAD-capped RNA hydrolase NudC from Enterobacter sp. (strain 638).